A 338-amino-acid polypeptide reads, in one-letter code: Ketol-acid reductoisomerase (NADP(+)) (338 aa).

The KARI N-terminal Rossmann domain maps to 1 to 181 (MKVFYDKDCD…GGGKAGIIET (181 aa)). NADP(+)-binding positions include 24–27 (YGSQ), R47, and S52. H107 is an active-site residue. G133 is a binding site for NADP(+). A KARI C-terminal knotted domain is found at 182 to 327 (NFKEETETDL…AQLRAMMPWI (146 aa)). Residues D190, E194, E226, and E230 each contribute to the Mg(2+) site. A substrate-binding site is contributed by S251.

Belongs to the ketol-acid reductoisomerase family. It depends on Mg(2+) as a cofactor.

The catalysed reaction is (2R)-2,3-dihydroxy-3-methylbutanoate + NADP(+) = (2S)-2-acetolactate + NADPH + H(+). The enzyme catalyses (2R,3R)-2,3-dihydroxy-3-methylpentanoate + NADP(+) = (S)-2-ethyl-2-hydroxy-3-oxobutanoate + NADPH + H(+). It participates in amino-acid biosynthesis; L-isoleucine biosynthesis; L-isoleucine from 2-oxobutanoate: step 2/4. It functions in the pathway amino-acid biosynthesis; L-valine biosynthesis; L-valine from pyruvate: step 2/4. Its function is as follows. Involved in the biosynthesis of branched-chain amino acids (BCAA). Catalyzes an alkyl-migration followed by a ketol-acid reduction of (S)-2-acetolactate (S2AL) to yield (R)-2,3-dihydroxy-isovalerate. In the isomerase reaction, S2AL is rearranged via a Mg-dependent methyl migration to produce 3-hydroxy-3-methyl-2-ketobutyrate (HMKB). In the reductase reaction, this 2-ketoacid undergoes a metal-dependent reduction by NADPH to yield (R)-2,3-dihydroxy-isovalerate. The polypeptide is Ketol-acid reductoisomerase (NADP(+)) (Paracidovorax citrulli (strain AAC00-1) (Acidovorax citrulli)).